The sequence spans 181 residues: MTEEHVVLLDEQDKPSGTLEKYAAHTLNTPLHLAFSCWLFNEDGQLLVTRRSLSKKAWPGVWTNSVCGHPQQGETTEEAIIRRCRFELGVEITDLTPVYPHFSYRATDPNGIVENEVCPVFAARATSVLQVNSEEVMDYQWSEFKSVWQSLLATPWAFSPWMVMQASDEQARKRLLNYCQR.

2 residues coordinate Mn(2+): histidine 25 and histidine 32. Residues 30–164 (PLHLAFSCWL…PWAFSPWMVM (135 aa)) form the Nudix hydrolase domain. The active site involves cysteine 67. Cysteine 67 is a Mg(2+) binding site. Position 69 (histidine 69) interacts with Mn(2+). Glutamate 87 is a Mg(2+) binding site. Mn(2+) contacts are provided by glutamate 114 and glutamate 116. Residue glutamate 116 is part of the active site.

The protein belongs to the IPP isomerase type 1 family. In terms of assembly, homodimer. Requires Mg(2+) as cofactor. Mn(2+) is required as a cofactor.

The protein resides in the cytoplasm. The catalysed reaction is isopentenyl diphosphate = dimethylallyl diphosphate. Its pathway is isoprenoid biosynthesis; dimethylallyl diphosphate biosynthesis; dimethylallyl diphosphate from isopentenyl diphosphate: step 1/1. Catalyzes the 1,3-allylic rearrangement of the homoallylic substrate isopentenyl (IPP) to its highly electrophilic allylic isomer, dimethylallyl diphosphate (DMAPP). The protein is Isopentenyl-diphosphate Delta-isomerase of Salmonella typhi.